We begin with the raw amino-acid sequence, 274 residues long: Large ribosomal subunit protein uL2cz/uL2cy (274 aa).

Residues 225 to 274 (PVDHPHGGGEGRAPIGRKKPVTPWGYPALGRRTRKRKKYSETLILRRRSK) form a disordered region.

This sequence belongs to the universal ribosomal protein uL2 family. In terms of assembly, part of the 50S ribosomal subunit.

The protein localises to the plastid. It localises to the chloroplast. This is Large ribosomal subunit protein uL2cz/uL2cy (rpl2-A) from Crucihimalaya wallichii (Rock-cress).